The following is a 391-amino-acid chain: uncharacterized protein (391 aa).

Residues 4–24 traverse the membrane as a helical segment; it reads FALIVGIVALAIFSFLYIQLY.

The protein resides in the membrane. This is an uncharacterized protein from Haemophilus influenzae (strain ATCC 51907 / DSM 11121 / KW20 / Rd).